A 211-amino-acid polypeptide reads, in one-letter code: Nucleoside triphosphate pyrophosphatase (211 aa).

Aspartate 78 functions as the Proton acceptor in the catalytic mechanism.

It belongs to the Maf family. A divalent metal cation is required as a cofactor.

It is found in the cytoplasm. It carries out the reaction a ribonucleoside 5'-triphosphate + H2O = a ribonucleoside 5'-phosphate + diphosphate + H(+). It catalyses the reaction a 2'-deoxyribonucleoside 5'-triphosphate + H2O = a 2'-deoxyribonucleoside 5'-phosphate + diphosphate + H(+). In terms of biological role, nucleoside triphosphate pyrophosphatase. May have a dual role in cell division arrest and in preventing the incorporation of modified nucleotides into cellular nucleic acids. The polypeptide is Nucleoside triphosphate pyrophosphatase (Mycolicibacterium smegmatis (strain ATCC 700084 / mc(2)155) (Mycobacterium smegmatis)).